The chain runs to 302 residues: Sulfate adenylyltransferase subunit 2 (302 aa).

Positions 280 to 302 (RQGRAIDHDQSGSMELKKRQGYF) are disordered.

This sequence belongs to the PAPS reductase family. CysD subfamily. In terms of assembly, heterodimer composed of CysD, the smaller subunit, and CysN.

The catalysed reaction is sulfate + ATP + H(+) = adenosine 5'-phosphosulfate + diphosphate. It participates in sulfur metabolism; hydrogen sulfide biosynthesis; sulfite from sulfate: step 1/3. In terms of biological role, with CysN forms the ATP sulfurylase (ATPS) that catalyzes the adenylation of sulfate producing adenosine 5'-phosphosulfate (APS) and diphosphate, the first enzymatic step in sulfur assimilation pathway. APS synthesis involves the formation of a high-energy phosphoric-sulfuric acid anhydride bond driven by GTP hydrolysis by CysN coupled to ATP hydrolysis by CysD. This is Sulfate adenylyltransferase subunit 2 from Vibrio vulnificus (strain CMCP6).